The following is a 347-amino-acid chain: Tetracycline resistance determinant (347 aa).

The next 8 helical transmembrane spans lie at 3–20, 30–52, 73–95, 108–130, 137–156, 161–183, 204–226, and 294–316; these read VLGAAALALFLVPLLIVA, SPAALALFALGAAGLAVFIPVEL, CSAVNFTIGVGIFGTVTTLPLFL, LVVIPFMLGTIASQMVSGKLIAS, LAIVGLGSMAGALLAMATTG, MWGIVLIVLWLGVGIGLSQTVIT, CAGQIGGSTGIAVLFSVMFAVAL, and GFHIMFLPGGVVLLAGFVMTWFL. Residues 321 to 347 form a disordered region; that stretch reads EETAPEEERPAESGAGAKNGPLPASDA.

It belongs to the major facilitator superfamily. TCR/Tet family.

It is found in the cell membrane. Functionally, resistance to tetracycline by an active tetracycline efflux. This is an energy-dependent process that decreases the accumulation of the antibiotic in whole cells. This protein functions as a metal-tetracycline/H(+) antiporter. The sequence is that of Tetracycline resistance determinant (tetB) from Streptomyces rimosus.